The sequence spans 61 residues: Insect toxin BsIT2 (61 aa).

Positions D1 to K61 constitute an LCN-type CS-alpha/beta domain. 4 disulfide bridges follow: C10–C60, C14–C35, C21–C42, and C25–C44.

The protein belongs to the long (4 C-C) scorpion toxin superfamily. Sodium channel inhibitor family. Beta subfamily. As to expression, expressed by the venom gland.

The protein localises to the secreted. Depressant insect beta-toxins cause a transient contraction paralysis followed by a slow flaccid paralysis. They bind voltage-independently at site-4 of sodium channels (Nav) and shift the voltage of activation toward more negative potentials thereby affecting sodium channel activation and promoting spontaneous and repetitive firing. This toxin is active only on insects. The polypeptide is Insect toxin BsIT2 (Hottentotta tamulus sindicus (Scorpion)).